Consider the following 550-residue polypeptide: Glucose-6-phosphate isomerase (550 aa).

E356 functions as the Proton donor in the catalytic mechanism. Active-site residues include H387 and K515.

The protein belongs to the GPI family.

The protein resides in the cytoplasm. It carries out the reaction alpha-D-glucose 6-phosphate = beta-D-fructose 6-phosphate. It functions in the pathway carbohydrate biosynthesis; gluconeogenesis. It participates in carbohydrate degradation; glycolysis; D-glyceraldehyde 3-phosphate and glycerone phosphate from D-glucose: step 2/4. Catalyzes the reversible isomerization of glucose-6-phosphate to fructose-6-phosphate. This chain is Glucose-6-phosphate isomerase, found in Aliivibrio fischeri (strain MJ11) (Vibrio fischeri).